A 438-amino-acid polypeptide reads, in one-letter code: Adenylosuccinate synthetase (438 aa).

Residues 13–19 (GDEGKGK) and 41–43 (GHT) each bind GTP. The Proton acceptor role is filled by Asp14. 2 residues coordinate Mg(2+): Asp14 and Gly41. IMP is bound by residues 14-17 (DEGK), 39-42 (NAGH), Thr136, Arg150, Gln231, Thr246, and Arg310. His42 acts as the Proton donor in catalysis. 306 to 312 (STTGRRR) lines the substrate pocket. GTP contacts are provided by residues Arg312, 338–340 (KID), and 421–423 (STG).

This sequence belongs to the adenylosuccinate synthetase family. As to quaternary structure, homodimer. Requires Mg(2+) as cofactor.

The protein resides in the cytoplasm. It carries out the reaction IMP + L-aspartate + GTP = N(6)-(1,2-dicarboxyethyl)-AMP + GDP + phosphate + 2 H(+). The protein operates within purine metabolism; AMP biosynthesis via de novo pathway; AMP from IMP: step 1/2. Plays an important role in the de novo pathway of purine nucleotide biosynthesis. Catalyzes the first committed step in the biosynthesis of AMP from IMP. The chain is Adenylosuccinate synthetase from Blochmanniella floridana.